The sequence spans 230 residues: RNA-binding riboflavin kinase RibR (230 aa).

It belongs to the RibR family.

The catalysed reaction is riboflavin + ATP = FMN + ADP + H(+). Functionally, may be directly involved in the regulation of the rib genes. C-terminal part of RibR specifically binds to RFN of the rib leader of the riboflavin biosynthetic operon. The RFN element is a sequence within the rib-leader mRNA reported to serve as a receptor for an FMN-dependent riboswitch. Possibly, RibR produces the comodulator FMN through its own N-terminal flavokinase activity. FMN-activated RibR may stabilize the anti-anti terminator structure of RFN mRNA, causing transcription termination of the rib genes in trans. This chain is RNA-binding riboflavin kinase RibR (ribR), found in Bacillus subtilis (strain 168).